Reading from the N-terminus, the 429-residue chain is UDP-glucuronate 4-epimerase 1 (429 aa).

Transmembrane regions (helical) follow at residues 36–56 and 87–107; these read FLWALFLIALTASYLSFQSFV and GISVLVTGATGFVGSHVSLAL. 89–120 is an NAD(+) binding site; that stretch reads SVLVTGATGFVGSHVSLALRKRGDGVVGLDNF. Y239 (proton acceptor) is an active-site residue.

It belongs to the NAD(P)-dependent epimerase/dehydratase family. In terms of assembly, homodimer. In terms of tissue distribution, in root stele, leaves, siliques, flowers, pollen and stems.

It is found in the golgi apparatus. The protein localises to the golgi stack membrane. It catalyses the reaction UDP-alpha-D-glucuronate = UDP-alpha-D-galacturonate. Its activity is regulated as follows. Inhibited by UDP-Xylose. In terms of biological role, UDP-D-glucuronate 4-epimerase involved in the synthesis of the negatively charged monosaccharide that forms the backbone of pectic cell wall components. This is UDP-glucuronate 4-epimerase 1 (GAE1) from Arabidopsis thaliana (Mouse-ear cress).